Here is a 932-residue protein sequence, read N- to C-terminus: MGTNGGRPTKLSLVPLPKGSVLLPGATLRIPVSNRPDLANLLSSLLDRTNAIRRDANSITFGCVPLCSPYLSKDGQHVIDNGTVDEDKKEEFESLEAGQARKEDLYRYGTLGKVIGVQRRAYSEPHLLVQGVQRLTVRRVLRERPFFEAECILHDEKETPLNDRETAELFQQLRQLSRELLTLLRYTSLIPNTGGPRLSPLIARKFELIITKSDLAQAGRLADVMADIAESGLEDKLRVLAAFDVKTRLERVVDILNKQNQIIRGSVKFTTISTDNIPPASVLDISQIDPRIRDLLSRRGIPGASGTPPPGLGGRNNEADEKESNELDELQQRLKDAQLSPEAQKVADKEMRRLRKMMPVNQEYGVIRTYLENLADIPWTKVTEDKLGPETLKAARKQLDDDHYGLEKIKKRLLEYLAVLRLKQSTNQGLEQQISILTKELDNSGGDIEKDIPSLPESDRAAIESKLNALTSKRTVDKSPILLLVGPPGTGKTSLARSVATALGRKFHRISLGGVRDEAEIRGHRRTYVAAMPGVIVNGLKKVGVANPVFLLDEIDKIGGPNFQGDPSAAMLEVLDPEQNHTFVDHYINIPIDLSKVLFIATANSLDTIPAPLLDRMETIQLSGYTTVEKRHIAKRHLLPKQIRANGLSDGQVVLSDDVIDKTTTSYTRESGVRNLERELGSICRYKAVQFADATDSAKLESYNPVVTVDDLEEILGIERFDEEIAEKHGRPGVVTGLVAYSTGGQGSILFIEVADMPGSGRVQLTGKLGDVLKESVEVALTWVKAHSFELGLTSDPNEDIMKNRSLHVHCPSGAIPKDGPSAGLAHTIGLISLFSGKAVPPKLAMTGEVSLRGRVMPVGGIKEKLIGALRAGVTTVLLPHQNRKDVKDVPEEVSNGLEIIYVKHIWEAIRHIWPDAHWPGQHHMDFVESRL.

One can recognise a Lon N-terminal domain in the interval 11 to 260 (LSLVPLPKGS…RVVDILNKQN (250 aa)). The segment at 298 to 328 (RRGIPGASGTPPPGLGGRNNEADEKESNELD) is disordered. Positions 317-328 (NEADEKESNELD) are enriched in basic and acidic residues. 486–493 (GPPGTGKT) contributes to the ATP binding site. One can recognise a Lon proteolytic domain in the interval 729 to 916 (HGRPGVVTGL…WEAIRHIWPD (188 aa)). Catalysis depends on residues Ser-822 and Lys-865. A Microbody targeting signal motif is present at residues 930-932 (SRL).

The protein belongs to the peptidase S16 family.

It localises to the peroxisome matrix. It carries out the reaction Hydrolysis of proteins in presence of ATP.. In terms of biological role, ATP-dependent serine protease that mediates the selective degradation of misfolded and unassembled polypeptides in the peroxisomal matrix. Necessary for type 2 peroxisome targeting signal (PTS2)-containing protein processing and facilitates peroxisome matrix protein import. In Emericella nidulans (strain FGSC A4 / ATCC 38163 / CBS 112.46 / NRRL 194 / M139) (Aspergillus nidulans), this protein is Lon protease homolog 2, peroxisomal.